The primary structure comprises 133 residues: Small ribosomal subunit protein uS8 (133 aa).

It belongs to the universal ribosomal protein uS8 family. In terms of assembly, part of the 30S ribosomal subunit. Contacts proteins S5 and S12.

One of the primary rRNA binding proteins, it binds directly to 16S rRNA central domain where it helps coordinate assembly of the platform of the 30S subunit. This Chlamydia abortus (strain DSM 27085 / S26/3) (Chlamydophila abortus) protein is Small ribosomal subunit protein uS8.